The primary structure comprises 220 residues: Ribose-5-phosphate isomerase A (220 aa).

Substrate is bound by residues 28–31, 81–84, and 94–97; these read TGST, DGAD, and KGGG. E103 (proton acceptor) is an active-site residue. K121 is a substrate binding site.

The protein belongs to the ribose 5-phosphate isomerase family. In terms of assembly, homodimer.

It catalyses the reaction aldehydo-D-ribose 5-phosphate = D-ribulose 5-phosphate. Its pathway is carbohydrate degradation; pentose phosphate pathway; D-ribose 5-phosphate from D-ribulose 5-phosphate (non-oxidative stage): step 1/1. In terms of biological role, catalyzes the reversible conversion of ribose-5-phosphate to ribulose 5-phosphate. The chain is Ribose-5-phosphate isomerase A from Aromatoleum aromaticum (strain DSM 19018 / LMG 30748 / EbN1) (Azoarcus sp. (strain EbN1)).